Consider the following 337-residue polypeptide: 2-oxoglutarate receptor 1 (337 aa).

Topologically, residues 1-34 are extracellular; it reads MNEPLDYLANASDFPDYAAAFGNCTDENIPLKMH. Asn10 and Asn23 each carry an N-linked (GlcNAc...) asparagine glycan. Residues 35-55 form a helical membrane-spanning segment; that stretch reads YLPVIYGIIFLVGFPGNAVVI. Residues 56–69 are Cytoplasmic-facing; the sequence is STYIFKMRPWKSST. A helical membrane pass occupies residues 70–90; that stretch reads IIMLNLACTDLLYLTSLPFLI. At 91 to 116 the chain is on the extracellular side; that stretch reads HYYASGENWIFGDFMCKFIRFSFHFN. Cys106 and Cys183 are disulfide-bonded. The chain crosses the membrane as a helical span at residues 117–137; that stretch reads LYSSILFLTCFSIFRYCVIIH. Residues 138–151 are Cytoplasmic-facing; it reads PMSCFSIHKTRCAV. The helical transmembrane segment at 152–172 threads the bilayer; that stretch reads VACAVVWIISLVAVIPMTFLI. Topologically, residues 173 to 201 are extracellular; the sequence is TSTNRTNRSACLDLTSSDELNTIKWYNLI. Residues Asn176 and Asn179 are each glycosylated (N-linked (GlcNAc...) asparagine). Residues 202–222 form a helical membrane-spanning segment; the sequence is LTATTFCLPLVIVTLCYTTII. The Cytoplasmic portion of the chain corresponds to 223–242; the sequence is HTLTHGLQTDSCLKQKARRL. Residues 243–263 form a helical membrane-spanning segment; sequence TILLLLAFYVCFLPFHILRVI. Residues 264 to 284 are Extracellular-facing; sequence RIESRLLSISCSIENQIHEAY. A helical transmembrane segment spans residues 285–305; it reads IVSRPLAALNTFGNLLLYVVV. The Cytoplasmic segment spans residues 306–337; the sequence is SDNFQQAVCSTVRCKVSGNLEQAKKISYSNNP.

It belongs to the G-protein coupled receptor 1 family. As to expression, detected in kidney and, to a lower extent, in placenta. Not detected in brain tissues including the frontal cortex, caudate putamen, thalamus, hypothalamus, hippocampus or pons.

It is found in the cell membrane. G protein-coupled receptor for dicarboxylates and amino dicarboxylates. Receptor for itaconate, a metabolite produced by myeloid lineages. In the respiratory epithelium, couples the binding of itaconate to the activation of GNA11 and downstream intracellular Ca(2+) release, leading to mucocilliary clearance of airborne pathogens. Receptor for leukotriene E4 (LTE4) produced by mast cells upon allergic inflammation. Binds with high affinity to LTE4 and elicits mucin release from pulmonary epithelium in response to airborne fungi allergens. Regulates mucin-producing goblet cell homeostasis. Receptor for alpha-ketoglutarate produced by proximal tubule renal cells upon metabolic alkalosis. In an intrarenal paracrine signaling pathway, binds alpha-ketoglutarate and drives transepithelial salt reabsorption and bicarbonate secretion by SLC26A4/pendrin-positive intercalated cells. In Homo sapiens (Human), this protein is 2-oxoglutarate receptor 1 (OXGR1).